Consider the following 480-residue polypeptide: Protein nucleotidyltransferase YdiU (480 aa).

8 residues coordinate ATP: glycine 86, glycine 88, arginine 89, lysine 109, aspartate 121, glycine 122, arginine 172, and arginine 179. Aspartate 248 (proton acceptor) is an active-site residue. Residues asparagine 249 and aspartate 258 each contribute to the Mg(2+) site. Aspartate 258 contacts ATP.

The protein belongs to the SELO family. It depends on Mg(2+) as a cofactor. The cofactor is Mn(2+).

The catalysed reaction is L-seryl-[protein] + ATP = 3-O-(5'-adenylyl)-L-seryl-[protein] + diphosphate. It catalyses the reaction L-threonyl-[protein] + ATP = 3-O-(5'-adenylyl)-L-threonyl-[protein] + diphosphate. The enzyme catalyses L-tyrosyl-[protein] + ATP = O-(5'-adenylyl)-L-tyrosyl-[protein] + diphosphate. It carries out the reaction L-histidyl-[protein] + UTP = N(tele)-(5'-uridylyl)-L-histidyl-[protein] + diphosphate. The catalysed reaction is L-seryl-[protein] + UTP = O-(5'-uridylyl)-L-seryl-[protein] + diphosphate. It catalyses the reaction L-tyrosyl-[protein] + UTP = O-(5'-uridylyl)-L-tyrosyl-[protein] + diphosphate. In terms of biological role, nucleotidyltransferase involved in the post-translational modification of proteins. It can catalyze the addition of adenosine monophosphate (AMP) or uridine monophosphate (UMP) to a protein, resulting in modifications known as AMPylation and UMPylation. The polypeptide is Protein nucleotidyltransferase YdiU (Salmonella heidelberg (strain SL476)).